Here is a 34-residue protein sequence, read N- to C-terminus: Kappa-theraphotoxin-Sc1a (34 aa).

3 cysteine pairs are disulfide-bonded: Cys2–Cys16, Cys9–Cys21, and Cys15–Cys28. Ile34 is modified (isoleucine amide).

This sequence belongs to the neurotoxin 10 (Hwtx-1) family. 57 (ScTx1) subfamily. In terms of tissue distribution, expressed by the venom gland.

The protein localises to the secreted. In terms of biological role, acts as a gating-modifier to inhibit voltage-gated potassium channels. It inhibits delayed Kv2.1/KCNB1 (IC(50) is 12.7 nM), Kv2.1/Kv9.3 (IC(50) is 7.2 nM) (KCNB1/KCNS3), Kv2.2/KCNB2 (IC(50) is 21.4 nM), and transient Kv4.2/KCND2 (IC(50) is 1.2 nM) channels. This Stromatopelma calceatum (Featherleg baboon tarantula) protein is Kappa-theraphotoxin-Sc1a.